Consider the following 391-residue polypeptide: MAVKVLVVDDSSFFRRRVSEILELDSEIEVIGFAVNGRDAVEKAASLRPDMITMDVEMPVLDGISAVKEIMASNPTPILMFSSLTRSGATATLDALDAGAMDFLPKKFEDIARNNEDAIKLLQSKVKEIGRQRIRRVASPRPSSINKPLFTPTSAPSALAARFAQTNKTATTVVQPERSFNNSPVTSRSAIVTKRASGKHYQLVAIGTSTGGPVALQTILTQLPANFPHPILLIQHMPAAFTPAFAARLNSLCKIQVKEAQQGDRLQAGVAYLAPGGQQMMIDGRGASRTLRVFEDNSERISYKPSVDVTFASAAKAYQGDVLAIVLTGMGADGREGARMLKQSGATIWAQDEKSCVVYGMPQAIANAGLASESLPLDEVAIRLKTEVGCG.

The 118-residue stretch at 4–121 folds into the Response regulatory domain; it reads KVLVVDDSSF…ARNNEDAIKL (118 aa). Residue Asp55 is modified to 4-aspartylphosphate. Residues 197 to 391 form the CheB-type methylesterase domain; it reads SGKHYQLVAI…IRLKTEVGCG (195 aa). Active-site residues include Ser209, His236, and Asp333.

It belongs to the CheB family. In terms of processing, phosphorylated by CheA. Phosphorylation of the N-terminal regulatory domain activates the methylesterase activity.

It localises to the cytoplasm. The catalysed reaction is [protein]-L-glutamate 5-O-methyl ester + H2O = L-glutamyl-[protein] + methanol + H(+). The enzyme catalyses L-glutaminyl-[protein] + H2O = L-glutamyl-[protein] + NH4(+). Functionally, involved in chemotaxis. Part of a chemotaxis signal transduction system that modulates chemotaxis in response to various stimuli. Catalyzes the demethylation of specific methylglutamate residues introduced into the chemoreceptors (methyl-accepting chemotaxis proteins or MCP) by CheR. Also mediates the irreversible deamidation of specific glutamine residues to glutamic acid. The sequence is that of Protein-glutamate methylesterase/protein-glutamine glutaminase from Pseudoalteromonas translucida (strain TAC 125).